A 178-amino-acid polypeptide reads, in one-letter code: Bifunctional protein PyrR (178 aa).

The short motif at 99–111 (VILVDDVLFTGRT) is the PRPP-binding element.

The protein belongs to the purine/pyrimidine phosphoribosyltransferase family. PyrR subfamily. In terms of assembly, homodimer and homohexamer; in equilibrium.

The enzyme catalyses UMP + diphosphate = 5-phospho-alpha-D-ribose 1-diphosphate + uracil. In terms of biological role, regulates transcriptional attenuation of the pyrimidine nucleotide (pyr) operon by binding in a uridine-dependent manner to specific sites on pyr mRNA. This disrupts an antiterminator hairpin in the RNA and favors formation of a downstream transcription terminator, leading to a reduced expression of downstream genes. Also displays a weak uracil phosphoribosyltransferase activity which is not physiologically significant. The protein is Bifunctional protein PyrR of Ligilactobacillus salivarius (strain UCC118) (Lactobacillus salivarius).